A 506-amino-acid polypeptide reads, in one-letter code: Lysine--tRNA ligase (506 aa).

The Mg(2+) site is built by Glu416 and Glu423.

The protein belongs to the class-II aminoacyl-tRNA synthetase family. In terms of assembly, homodimer. Mg(2+) serves as cofactor.

The protein localises to the cytoplasm. The enzyme catalyses tRNA(Lys) + L-lysine + ATP = L-lysyl-tRNA(Lys) + AMP + diphosphate. The sequence is that of Lysine--tRNA ligase from Bordetella bronchiseptica (strain ATCC BAA-588 / NCTC 13252 / RB50) (Alcaligenes bronchisepticus).